We begin with the raw amino-acid sequence, 340 residues long: Protein-lysine N-methyltransferase EEF2KMT (340 aa).

Residue methionine 1 is modified to N-acetylmethionine. Residues tryptophan 139, 165-167 (GSG), tryptophan 238, and alanine 257 each bind S-adenosyl-L-methionine.

It belongs to the class I-like SAM-binding methyltransferase superfamily. EEF2KMT family. In terms of assembly, interacts with FAM86B2 and FAM86C1P.

Its subcellular location is the cytoplasm. The enzyme catalyses L-lysyl-[protein] + 3 S-adenosyl-L-methionine = N(6),N(6),N(6)-trimethyl-L-lysyl-[protein] + 3 S-adenosyl-L-homocysteine + 3 H(+). Functionally, catalyzes the trimethylation of eukaryotic elongation factor 2 (EEF2) on 'Lys-525'. This is Protein-lysine N-methyltransferase EEF2KMT (EEF2KMT) from Bos taurus (Bovine).